The following is a 347-amino-acid chain: GMP reductase (347 aa).

108-131 (ADFEKTKQILDLNPALNFVCIDVA) is a binding site for NADP(+). Residues G181 and G183 each coordinate K(+). C186 serves as the catalytic Thioimidate intermediate. Residue 216–239 (IVSDGGCTTPGDVAKAFGGGADFV) participates in NADP(+) binding.

Belongs to the IMPDH/GMPR family. GuaC type 1 subfamily. In terms of assembly, homotetramer.

The catalysed reaction is IMP + NH4(+) + NADP(+) = GMP + NADPH + 2 H(+). Functionally, catalyzes the irreversible NADPH-dependent deamination of GMP to IMP. It functions in the conversion of nucleobase, nucleoside and nucleotide derivatives of G to A nucleotides, and in maintaining the intracellular balance of A and G nucleotides. The protein is GMP reductase of Escherichia coli O127:H6 (strain E2348/69 / EPEC).